A 1331-amino-acid polypeptide reads, in one-letter code: ABC multidrug transporter MDR2 (1331 aa).

2 stretches are compositionally biased toward basic and acidic residues: residues Met-1–Asn-20 and Ser-31–Asn-41. The segment at Met-1–Glu-51 is disordered. Helical transmembrane passes span Met-93–Phe-113, Tyr-147–Ile-167, Lys-219–Val-239, and Trp-242–Ile-262. An ABC transmembrane type-1 1 domain is found at Ala-97–Ser-387. A glycan (N-linked (GlcNAc...) asparagine) is linked at Asn-293. 2 helical membrane passes run Leu-325–Trp-345 and Leu-358–Val-378. One can recognise an ABC transporter 1 domain in the interval Ile-422–Ala-667. Gly-457 to Ser-464 serves as a coordination point for ATP. Residue Asn-529 is glycosylated (N-linked (GlcNAc...) asparagine). The next 2 membrane-spanning stretches (helical) occupy residues Leu-762–Phe-782 and Phe-810–Ile-830. The ABC transmembrane type-1 2 domain occupies Gly-764–Lys-1051. N-linked (GlcNAc...) asparagine glycosylation occurs at Asn-860. 4 helical membrane passes run Leu-884–Phe-904, Leu-910–Leu-930, Ala-995–Leu-1015, and Phe-1025–Phe-1045. One can recognise an ABC transporter 2 domain in the interval Ile-1086–Met-1324. N-linked (GlcNAc...) asparagine glycosylation is present at Asn-1108. Gly-1121–Ser-1128 is a binding site for ATP.

The protein belongs to the ABC transporter superfamily. ABCB family. Multidrug resistance exporter (TC 3.A.1.201) subfamily.

It is found in the cell membrane. The enzyme catalyses itraconazole(in) + ATP + H2O = itraconazole(out) + ADP + phosphate + H(+). Its function is as follows. Pleiotropic ABC efflux transporter that may be involved in the modulation susceptibility to a wide range of unrelated cytotoxic compounds, including terbinafine, 4-nitroquinoline N-oxide, and ethidium bromide. May play a role in pathogenicity. The chain is ABC multidrug transporter MDR2 from Trichophyton interdigitale (strain MR816).